We begin with the raw amino-acid sequence, 332 residues long: Protein EXORDIUM-like 6 (332 aa).

An N-terminal signal peptide occupies residues 1 to 27 (MAMASASSSSSSISVIIFLLLAPLCLS). N-linked (GlcNAc...) asparagine glycosylation is found at N36, N102, and N143.

It belongs to the EXORDIUM family.

It is found in the secreted. Its subcellular location is the extracellular space. The protein resides in the apoplast. May play a role in a brassinosteroid-dependent regulation of growth and development. The chain is Protein EXORDIUM-like 6 (EXL6) from Arabidopsis thaliana (Mouse-ear cress).